A 157-amino-acid polypeptide reads, in one-letter code: Ribosomal RNA large subunit methyltransferase H (157 aa).

Residues leucine 73, glycine 104, and 123–128 each bind S-adenosyl-L-methionine; that span reads LGPLTL.

The protein belongs to the RNA methyltransferase RlmH family. Homodimer.

The protein resides in the cytoplasm. The enzyme catalyses pseudouridine(1915) in 23S rRNA + S-adenosyl-L-methionine = N(3)-methylpseudouridine(1915) in 23S rRNA + S-adenosyl-L-homocysteine + H(+). Functionally, specifically methylates the pseudouridine at position 1915 (m3Psi1915) in 23S rRNA. This Xylella fastidiosa (strain M23) protein is Ribosomal RNA large subunit methyltransferase H.